The following is a 337-amino-acid chain: Fructose-1,6-bisphosphatase class 1 (337 aa).

Mg(2+)-binding residues include E92, D114, L116, and D117. Substrate-binding positions include 117 to 120 (DGSS), N209, and K275. E281 is a binding site for Mg(2+).

It belongs to the FBPase class 1 family. As to quaternary structure, homotetramer. Mg(2+) is required as a cofactor.

The protein resides in the cytoplasm. It catalyses the reaction beta-D-fructose 1,6-bisphosphate + H2O = beta-D-fructose 6-phosphate + phosphate. It participates in carbohydrate biosynthesis; gluconeogenesis. In Thiobacillus denitrificans (strain ATCC 25259 / T1), this protein is Fructose-1,6-bisphosphatase class 1.